The following is a 421-amino-acid chain: D-amino acid dehydrogenase (421 aa).

Position 3–17 (3–17) interacts with FAD; it reads VTILGAGVIGVTSAY.

Belongs to the DadA oxidoreductase family. Requires FAD as cofactor.

The catalysed reaction is a D-alpha-amino acid + A + H2O = a 2-oxocarboxylate + AH2 + NH4(+). The protein operates within amino-acid degradation; D-alanine degradation; NH(3) and pyruvate from D-alanine: step 1/1. Functionally, oxidative deamination of D-amino acids. This is D-amino acid dehydrogenase from Allorhizobium ampelinum (strain ATCC BAA-846 / DSM 112012 / S4) (Agrobacterium vitis (strain S4)).